Consider the following 126-residue polypeptide: Follitropin subunit beta (126 aa).

The first 19 residues, 1-19 (MKLIQLCILFWCWRAICCQ), serve as a signal peptide directing secretion. Disulfide bonds link Cys21-Cys69, Cys35-Cys84, Cys38-Cys122, Cys46-Cys100, Cys50-Cys102, and Cys105-Cys112. Residues Asn25 and Asn42 are each glycosylated (N-linked (GlcNAc...) asparagine).

It belongs to the glycoprotein hormones subunit beta family. As to quaternary structure, heterodimer. The active follitropin is a heterodimer composed of an alpha chain/CGA shared with other hormones and a unique beta chain/FSHB shown here.

Its subcellular location is the secreted. Its function is as follows. Together with the alpha chain CGA constitutes follitropin, the follicle-stimulating hormone, and provides its biological specificity to the hormone heterodimer. Binds FSHR, a G protein-coupled receptor, on target cells to activate downstream signaling pathways. Follitropin is involved in follicle development and spermatogenesis in reproductive organs. This chain is Follitropin subunit beta (FSHB), found in Phodopus sungorus (Striped hairy-footed hamster).